We begin with the raw amino-acid sequence, 65 residues long: uncharacterized protein (65 aa).

The active-site Nucleophile is the Cys9. Arg15 is an active-site residue.

This sequence belongs to the low molecular weight phosphotyrosine protein phosphatase family.

This is an uncharacterized protein from Synechococcus sp. (strain WH8020).